A 432-amino-acid polypeptide reads, in one-letter code: Glutamyl-tRNA reductase (432 aa).

Substrate contacts are provided by residues 49 to 52, serine 101, 106 to 108, and glutamine 112; these read TCNR and ESQ. Residue cysteine 50 is the Nucleophile of the active site. 181 to 186 contributes to the NADP(+) binding site; that stretch reads GTGETI.

Belongs to the glutamyl-tRNA reductase family. As to quaternary structure, homodimer.

The enzyme catalyses (S)-4-amino-5-oxopentanoate + tRNA(Glu) + NADP(+) = L-glutamyl-tRNA(Glu) + NADPH + H(+). It participates in porphyrin-containing compound metabolism; protoporphyrin-IX biosynthesis; 5-aminolevulinate from L-glutamyl-tRNA(Glu): step 1/2. Functionally, catalyzes the NADPH-dependent reduction of glutamyl-tRNA(Glu) to glutamate 1-semialdehyde (GSA). The sequence is that of Glutamyl-tRNA reductase from Xylella fastidiosa (strain M12).